Here is a 370-residue protein sequence, read N- to C-terminus: DnaJ homolog subfamily B member 12 (370 aa).

An N-acetylmethionine modification is found at methionine 1. Positions 51 to 92 (NQKPQPAGDQPQPTEATHTTHRKAAGANTASANGEAGGESTK) are disordered. The J domain occupies 110–174 (DYYEILGVSR…EKRKQYDQFG (65 aa)). Histidine 185 carries the post-translational modification Pros-methylhistidine. Residues 242 to 262 (GGLGVFVQLMPILILILVSAL) form a helical membrane-spanning segment.

The protein belongs to the DnaJ family. DNAJB12/DNAJB14 subfamily. In terms of assembly, homodimer and homotetramer. Interacts (via J domain) with HSPA8/Hsc70. Forms a multiprotein complex, at least composed of DNAJB12, DNAJB14, HSPA8/Hsc70 and SGTA; interaction with DNAJB14 and HSPA8/Hsc70 is direct. Post-translationally, methylated at His-185 by METTL9.

The protein resides in the endoplasmic reticulum membrane. The protein localises to the nucleus membrane. In terms of biological role, acts as a co-chaperone with HSPA8/Hsc70; required to promote protein folding and trafficking, prevent aggregation of client proteins, and promote unfolded proteins to endoplasmic reticulum-associated degradation (ERAD) pathway. Acts by determining HSPA8/Hsc70's ATPase and polypeptide-binding activities. Can also act independently of HSPA8/Hsc70: together with DNAJB14, acts as a chaperone that promotes maturation of potassium channels KCND2 and KCNH2 by stabilizing nascent channel subunits and assembling them into tetramers. While stabilization of nascent channel proteins is dependent on HSPA8/Hsc70, the process of oligomerization of channel subunits is independent of HSPA8/Hsc70. When overexpressed, forms membranous structures together with DNAJB14 and HSPA8/Hsc70 within the nucleus; the role of these structures, named DJANGOs, is still unclear. The protein is DnaJ homolog subfamily B member 12 (DNAJB12) of Bos taurus (Bovine).